Reading from the N-terminus, the 295-residue chain is Protein NEOXANTHIN-DEFICIENT 1 (295 aa).

The tract at residues Pro221–Val251 is disordered.

Its function is as follows. Required for neoxanthin biosynthesis. Probably not involved directly in the enzymatic conversion of violaxanthin to neoxanthin. Is necessary but not sufficient for neoxanthin synthesis. Seems not required for abscisic acid (ABA) biosynthesis in response to drought stress. This Solanum lycopersicum (Tomato) protein is Protein NEOXANTHIN-DEFICIENT 1.